We begin with the raw amino-acid sequence, 284 residues long: D-tagatose-1,6-bisphosphate aldolase subunit GatY (284 aa).

Catalysis depends on D82, which acts as the Proton donor. Zn(2+) contacts are provided by H83 and H180. Residue G181 coordinates dihydroxyacetone phosphate. H208 contributes to the Zn(2+) binding site. Dihydroxyacetone phosphate is bound by residues 209-211 and 230-233; these read GAS and NVAT.

It belongs to the class II fructose-bisphosphate aldolase family. TagBP aldolase GatY subfamily. Forms a complex with GatZ. Zn(2+) serves as cofactor.

It carries out the reaction D-tagatofuranose 1,6-bisphosphate = D-glyceraldehyde 3-phosphate + dihydroxyacetone phosphate. Its pathway is carbohydrate metabolism; D-tagatose 6-phosphate degradation; D-glyceraldehyde 3-phosphate and glycerone phosphate from D-tagatose 6-phosphate: step 2/2. Its function is as follows. Catalytic subunit of the tagatose-1,6-bisphosphate aldolase GatYZ, which catalyzes the reversible aldol condensation of dihydroxyacetone phosphate (DHAP or glycerone-phosphate) with glyceraldehyde 3-phosphate (G3P) to produce tagatose 1,6-bisphosphate (TBP). Requires GatZ subunit for full activity and stability. Is involved in the catabolism of galactitol. The polypeptide is D-tagatose-1,6-bisphosphate aldolase subunit GatY (Escherichia coli O17:K52:H18 (strain UMN026 / ExPEC)).